We begin with the raw amino-acid sequence, 143 residues long: Large ribosomal subunit protein uL16c (143 aa).

Belongs to the universal ribosomal protein uL16 family. In terms of assembly, part of the 50S ribosomal subunit.

The protein resides in the plastid. The protein localises to the chloroplast. The sequence is that of Large ribosomal subunit protein uL16c from Marchantia polymorpha (Common liverwort).